Reading from the N-terminus, the 626-residue chain is MLSSLLAGAGLVALAASHPTSHGNALTRRAVDINAFRLTATSEYVNATVAVSEPSLRFLKRADYLETATELVKSVAKDATFRVVEDHYVGSNGIAHVNFKQTANGLDIDNADFNINVAKDGSIFSYGNSFYTGAIPANPLQKRDFSDPVDALKAANDKLQLAVTAEKASAESTGAKETFTLKGTSGAVKDPEAKLVYLVKSDGNLALTWRVETDIMSNWLLTYVDAATNQEIHGVVDYSADATYQVYPWGLNDPTEGSRAVVTNPWDTTASEFTWQGTGTTTYNVPRGNNAIAQSNTDGGSDYLSNYRPTSTSQNFSYPYTLQMSPPSTYVDASVTQLFYTANVYHDLLHSLGFNERAGNFEVNNNGAGGSGNDMVILNTHDGSDTNNANFATPPDGQPGRMRMFLWDLSTPNRDSSFEAGVVIHEYTHGLSNRLTGGPANSNCLNALESGGMGEGWGDFMATAIRLKAGDTRAKDYTMGSWIANDPKGIRTYPYSTSLTTNPHKYTDVNNLRGVHPIGTVWATMLYEVMWNLIDRYGKNDGAKPTFGANGAPTDGKYLAMKLVVDGMALPNFVQARDAILDADVALTGGANKCDIWKGFAKRGLGSGARYSSTARTGSTALPSGC.

An N-terminal signal peptide occupies residues 1–17 (MLSSLLAGAGLVALAAS). Positions 18–241 (HPTSHGNALT…IHGVVDYSAD (224 aa)) are excised as a propeptide. N315 carries an N-linked (GlcNAc...) asparagine glycan. H425 contributes to the Zn(2+) binding site. E426 is an active-site residue. Position 429 (H429) interacts with Zn(2+). Positions 606 to 626 (GSGARYSSTARTGSTALPSGC) are disordered. A compositionally biased stretch (polar residues) spans 610–626 (RYSSTARTGSTALPSGC).

It belongs to the peptidase M36 family. The cofactor is Zn(2+).

Its subcellular location is the secreted. Its function is as follows. Secreted metalloproteinase that allows assimilation of proteinaceous substrates. This is Extracellular metalloproteinase 1 (MEP1) from Phaeosphaeria nodorum (strain SN15 / ATCC MYA-4574 / FGSC 10173) (Glume blotch fungus).